Reading from the N-terminus, the 216-residue chain is NADH-quinone oxidoreductase subunit C (216 aa).

Belongs to the complex I 30 kDa subunit family. In terms of assembly, NDH-1 is composed of 14 different subunits. Subunits NuoB, C, D, E, F, and G constitute the peripheral sector of the complex.

Its subcellular location is the cell inner membrane. The catalysed reaction is a quinone + NADH + 5 H(+)(in) = a quinol + NAD(+) + 4 H(+)(out). Functionally, NDH-1 shuttles electrons from NADH, via FMN and iron-sulfur (Fe-S) centers, to quinones in the respiratory chain. The immediate electron acceptor for the enzyme in this species is believed to be ubiquinone. Couples the redox reaction to proton translocation (for every two electrons transferred, four hydrogen ions are translocated across the cytoplasmic membrane), and thus conserves the redox energy in a proton gradient. The protein is NADH-quinone oxidoreductase subunit C of Francisella tularensis subsp. holarctica (strain FTNF002-00 / FTA).